The chain runs to 476 residues: Glycogen synthase (476 aa).

K15 is a binding site for ADP-alpha-D-glucose.

This sequence belongs to the glycosyltransferase 1 family. Bacterial/plant glycogen synthase subfamily.

The catalysed reaction is [(1-&gt;4)-alpha-D-glucosyl](n) + ADP-alpha-D-glucose = [(1-&gt;4)-alpha-D-glucosyl](n+1) + ADP + H(+). Its pathway is glycan biosynthesis; glycogen biosynthesis. Functionally, synthesizes alpha-1,4-glucan chains using ADP-glucose. In Haemophilus influenzae (strain 86-028NP), this protein is Glycogen synthase.